We begin with the raw amino-acid sequence, 540 residues long: Chaperonin GroEL (540 aa).

Residues 29-32, 86-90, G413, 476-478, and D492 contribute to the ATP site; these read TLGP, DGTTT, and NAA.

The protein belongs to the chaperonin (HSP60) family. In terms of assembly, forms a cylinder of 14 subunits composed of two heptameric rings stacked back-to-back. Interacts with the co-chaperonin GroES.

Its subcellular location is the cytoplasm. It catalyses the reaction ATP + H2O + a folded polypeptide = ADP + phosphate + an unfolded polypeptide.. In terms of biological role, together with its co-chaperonin GroES, plays an essential role in assisting protein folding. The GroEL-GroES system forms a nano-cage that allows encapsulation of the non-native substrate proteins and provides a physical environment optimized to promote and accelerate protein folding. In Streptococcus pneumoniae (strain Hungary19A-6), this protein is Chaperonin GroEL.